A 279-amino-acid polypeptide reads, in one-letter code: Putative pyruvate, phosphate dikinase regulatory protein (279 aa).

153–160 (GISRTSKT) is an ADP binding site.

Belongs to the pyruvate, phosphate/water dikinase regulatory protein family. PDRP subfamily.

The catalysed reaction is N(tele)-phospho-L-histidyl/L-threonyl-[pyruvate, phosphate dikinase] + ADP = N(tele)-phospho-L-histidyl/O-phospho-L-threonyl-[pyruvate, phosphate dikinase] + AMP + H(+). It catalyses the reaction N(tele)-phospho-L-histidyl/O-phospho-L-threonyl-[pyruvate, phosphate dikinase] + phosphate + H(+) = N(tele)-phospho-L-histidyl/L-threonyl-[pyruvate, phosphate dikinase] + diphosphate. Its function is as follows. Bifunctional serine/threonine kinase and phosphorylase involved in the regulation of the pyruvate, phosphate dikinase (PPDK) by catalyzing its phosphorylation/dephosphorylation. The sequence is that of Putative pyruvate, phosphate dikinase regulatory protein from Brucella melitensis biotype 2 (strain ATCC 23457).